Here is a 156-residue protein sequence, read N- to C-terminus: ATP synthase subunit b 2 (156 aa).

The chain crosses the membrane as a helical span at residues 6-26 (SMFGQAISFVIFVWLCMKYVW).

The protein belongs to the ATPase B chain family. In terms of assembly, F-type ATPases have 2 components, F(1) - the catalytic core - and F(0) - the membrane proton channel. F(1) has five subunits: alpha(3), beta(3), gamma(1), delta(1), epsilon(1). F(0) has three main subunits: a(1), b(2) and c(10-14). The alpha and beta chains form an alternating ring which encloses part of the gamma chain. F(1) is attached to F(0) by a central stalk formed by the gamma and epsilon chains, while a peripheral stalk is formed by the delta and b chains.

The protein localises to the cell inner membrane. F(1)F(0) ATP synthase produces ATP from ADP in the presence of a proton or sodium gradient. F-type ATPases consist of two structural domains, F(1) containing the extramembraneous catalytic core and F(0) containing the membrane proton channel, linked together by a central stalk and a peripheral stalk. During catalysis, ATP synthesis in the catalytic domain of F(1) is coupled via a rotary mechanism of the central stalk subunits to proton translocation. In terms of biological role, component of the F(0) channel, it forms part of the peripheral stalk, linking F(1) to F(0). This chain is ATP synthase subunit b 2, found in Vibrio campbellii (strain ATCC BAA-1116).